The following is a 209-amino-acid chain: COP9 signalosome complex subunit 8 (209 aa).

Positions 8-179 constitute a PCI domain; it reads ESAFSFKKLL…GALDVSFNKF (172 aa). The residue at position 175 (serine 175) is a Phosphoserine.

Belongs to the CSN8 family. Component of the CSN complex, composed of COPS1/GPS1, COPS2, COPS3, COPS4, COPS5, COPS6, COPS7 (COPS7A or COPS7B), COPS8 and COPS9. In the complex, it probably interacts directly with COPS3, COPS4 and COPS7 (COPS7A or COPS7B).

The protein localises to the cytoplasm. Its subcellular location is the nucleus. Component of the COP9 signalosome complex (CSN), a complex involved in various cellular and developmental processes. The CSN complex is an essential regulator of the ubiquitin (Ubl) conjugation pathway by mediating the deneddylation of the cullin subunits of SCF-type E3 ligase complexes, leading to decrease the Ubl ligase activity of SCF-type complexes such as SCF, CSA or DDB2. The complex is also involved in phosphorylation of p53/TP53, c-jun/JUN, IkappaBalpha/NFKBIA, ITPK1 and IRF8/ICSBP, possibly via its association with CK2 and PKD kinases. CSN-dependent phosphorylation of TP53 and JUN promotes and protects degradation by the Ubl system, respectively. The protein is COP9 signalosome complex subunit 8 (COPS8) of Pongo abelii (Sumatran orangutan).